Consider the following 257-residue polypeptide: Thiazole synthase (257 aa).

Residue lysine 96 is the Schiff-base intermediate with DXP of the active site. 1-deoxy-D-xylulose 5-phosphate contacts are provided by residues glycine 157, alanine 184 to glycine 185, and asparagine 206 to threonine 207.

The protein belongs to the ThiG family. Homotetramer. Forms heterodimers with either ThiH or ThiS.

The protein localises to the cytoplasm. The catalysed reaction is [ThiS sulfur-carrier protein]-C-terminal-Gly-aminoethanethioate + 2-iminoacetate + 1-deoxy-D-xylulose 5-phosphate = [ThiS sulfur-carrier protein]-C-terminal Gly-Gly + 2-[(2R,5Z)-2-carboxy-4-methylthiazol-5(2H)-ylidene]ethyl phosphate + 2 H2O + H(+). The protein operates within cofactor biosynthesis; thiamine diphosphate biosynthesis. Catalyzes the rearrangement of 1-deoxy-D-xylulose 5-phosphate (DXP) to produce the thiazole phosphate moiety of thiamine. Sulfur is provided by the thiocarboxylate moiety of the carrier protein ThiS. In vitro, sulfur can be provided by H(2)S. In Bartonella bacilliformis (strain ATCC 35685 / KC583 / Herrer 020/F12,63), this protein is Thiazole synthase.